The sequence spans 400 residues: MFNKLVLILNCGSSSLKFSVVSSDNYTTKLSGIVEFLNLSQIRFFWKIKKKEYVRVINKSKSYDYALNYILTKILKEESKIFNNIACVGHRVVHGGVNLNKSVLITQEIIKLITDACSFAPLHNPINLLGIKASHAVLPHLKEKNVAVFDTSFHSSIPKFAYLYAIPYKFYKKFGIRKYGAHGISCQYSVCRSSELLQIELTSLNIIICHLGGGASVSVVKNGVCVDTSMGLTPLEGLIMGTRSGDIDPSVIFFMNKQLNLSISTINNILINKSGLLGLSGVSSDFRNLESEYNSNIRIKLAIDMFCYRLSKYISGYMSVVKGKLHGIVFTGGIGENSSLVRSIVISKLAFLNFKLNSDINMLMKSGKEGFINIKNTFPILVIPANEELIIAKESFSEIN.

Asn-10 serves as a coordination point for Mg(2+). Lys-17 contributes to the ATP binding site. Substrate is bound at residue Arg-91. The active-site Proton donor/acceptor is Asp-150. Residues 210–214 (HLGGG), 285–287 (DFR), and 333–337 (GIGEN) each bind ATP. Glu-387 contacts Mg(2+).

Belongs to the acetokinase family. In terms of assembly, homodimer. Mg(2+) serves as cofactor. Mn(2+) is required as a cofactor.

Its subcellular location is the cytoplasm. It catalyses the reaction acetate + ATP = acetyl phosphate + ADP. The protein operates within metabolic intermediate biosynthesis; acetyl-CoA biosynthesis; acetyl-CoA from acetate: step 1/2. In terms of biological role, catalyzes the formation of acetyl phosphate from acetate and ATP. Can also catalyze the reverse reaction. The sequence is that of Acetate kinase from Buchnera aphidicola subsp. Baizongia pistaciae (strain Bp).